Reading from the N-terminus, the 96-residue chain is Pyrimidine/purine nucleoside phosphorylase (96 aa).

Belongs to the nucleoside phosphorylase PpnP family.

The enzyme catalyses a purine D-ribonucleoside + phosphate = a purine nucleobase + alpha-D-ribose 1-phosphate. It carries out the reaction adenosine + phosphate = alpha-D-ribose 1-phosphate + adenine. It catalyses the reaction cytidine + phosphate = cytosine + alpha-D-ribose 1-phosphate. The catalysed reaction is guanosine + phosphate = alpha-D-ribose 1-phosphate + guanine. The enzyme catalyses inosine + phosphate = alpha-D-ribose 1-phosphate + hypoxanthine. It carries out the reaction thymidine + phosphate = 2-deoxy-alpha-D-ribose 1-phosphate + thymine. It catalyses the reaction uridine + phosphate = alpha-D-ribose 1-phosphate + uracil. The catalysed reaction is xanthosine + phosphate = alpha-D-ribose 1-phosphate + xanthine. Functionally, catalyzes the phosphorolysis of diverse nucleosides, yielding D-ribose 1-phosphate and the respective free bases. Can use uridine, adenosine, guanosine, cytidine, thymidine, inosine and xanthosine as substrates. Also catalyzes the reverse reactions. This Serratia proteamaculans (strain 568) protein is Pyrimidine/purine nucleoside phosphorylase.